We begin with the raw amino-acid sequence, 275 residues long: Thiazole synthase (275 aa).

The active-site Schiff-base intermediate with DXP is the lysine 108. 1-deoxy-D-xylulose 5-phosphate-binding positions include glycine 169, alanine 196–glycine 197, and asparagine 218–threonine 219.

The protein belongs to the ThiG family. In terms of assembly, homotetramer. Forms heterodimers with either ThiH or ThiS.

The protein localises to the cytoplasm. The enzyme catalyses [ThiS sulfur-carrier protein]-C-terminal-Gly-aminoethanethioate + 2-iminoacetate + 1-deoxy-D-xylulose 5-phosphate = [ThiS sulfur-carrier protein]-C-terminal Gly-Gly + 2-[(2R,5Z)-2-carboxy-4-methylthiazol-5(2H)-ylidene]ethyl phosphate + 2 H2O + H(+). It functions in the pathway cofactor biosynthesis; thiamine diphosphate biosynthesis. In terms of biological role, catalyzes the rearrangement of 1-deoxy-D-xylulose 5-phosphate (DXP) to produce the thiazole phosphate moiety of thiamine. Sulfur is provided by the thiocarboxylate moiety of the carrier protein ThiS. In vitro, sulfur can be provided by H(2)S. This is Thiazole synthase from Ralstonia pickettii (strain 12J).